A 157-amino-acid chain; its full sequence is 2-C-methyl-D-erythritol 2,4-cyclodiphosphate synthase (157 aa).

A divalent metal cation contacts are provided by D8 and H10. Residues 8-10 (DVH) and 34-35 (HS) each bind 4-CDP-2-C-methyl-D-erythritol 2-phosphate. Residue H42 coordinates a divalent metal cation. Residues 56–58 (DIG), 61–65 (FPDTD), 100–106 (AQAPKMA), 132–135 (TTSE), F139, and R142 each bind 4-CDP-2-C-methyl-D-erythritol 2-phosphate.

The protein belongs to the IspF family. Homotrimer. A divalent metal cation serves as cofactor.

The catalysed reaction is 4-CDP-2-C-methyl-D-erythritol 2-phosphate = 2-C-methyl-D-erythritol 2,4-cyclic diphosphate + CMP. It participates in isoprenoid biosynthesis; isopentenyl diphosphate biosynthesis via DXP pathway; isopentenyl diphosphate from 1-deoxy-D-xylulose 5-phosphate: step 4/6. Involved in the biosynthesis of isopentenyl diphosphate (IPP) and dimethylallyl diphosphate (DMAPP), two major building blocks of isoprenoid compounds. Catalyzes the conversion of 4-diphosphocytidyl-2-C-methyl-D-erythritol 2-phosphate (CDP-ME2P) to 2-C-methyl-D-erythritol 2,4-cyclodiphosphate (ME-CPP) with a corresponding release of cytidine 5-monophosphate (CMP). The sequence is that of 2-C-methyl-D-erythritol 2,4-cyclodiphosphate synthase from Photobacterium profundum (strain SS9).